The sequence spans 300 residues: Ankyrin repeat domain-containing protein 54 (300 aa).

Residues 1-27 are disordered; that stretch reads MAAAAGDADDEPRSGHSSSEGECAVAP. At A2 the chain carries N-acetylalanine. 2 positions are modified to phosphoserine: S58 and S63. The Nuclear localization signal (NLS) signature appears at 99–117; it reads RRLGPTGKEVHALKRLRDS. 4 ANK repeats span residues 109–138, 142–171, 175–204, and 208–244; these read HALK…DPCA, KGRT…DPNQ, LGNT…RVDA, and AGRT…IIHM. Residues 141–241 are LYN-binding; sequence DKGRTALHFA…EAVRLEVKQI (101 aa). Residues 283–293 carry the Nuclear export signal (NES) motif; sequence LLASFTSLSLQ.

In terms of assembly, interacts (via ankyrin repeat region) with LYN (via SH3-domain) in an activation-independent status of LYN. Forms a multiprotein complex with LYN and HCLS1. Interacts with TSN2, VAV1, DBNL and LASP1.

The protein resides in the nucleus. The protein localises to the cytoplasm. Its subcellular location is the midbody. Its function is as follows. Plays an important role in regulating intracellular signaling events associated with erythroid terminal differentiation. The protein is Ankyrin repeat domain-containing protein 54 (ANKRD54) of Homo sapiens (Human).